Reading from the N-terminus, the 215-residue chain is Large ribosomal subunit protein uL3 (215 aa).

The disordered stretch occupies residues Gly-136 to Lys-155. At Gln-151 the chain carries N5-methylglutamine.

The protein belongs to the universal ribosomal protein uL3 family. As to quaternary structure, part of the 50S ribosomal subunit. Forms a cluster with proteins L14 and L19. In terms of processing, methylated by PrmB.

In terms of biological role, one of the primary rRNA binding proteins, it binds directly near the 3'-end of the 23S rRNA, where it nucleates assembly of the 50S subunit. The polypeptide is Large ribosomal subunit protein uL3 (Rickettsia africae (strain ESF-5)).